The chain runs to 406 residues: Elongation factor Tu (406 aa).

The tr-type G domain maps to 10–215; the sequence is KPHVNVGTIG…AIDEYIPTPV (206 aa). The interval 19–26 is G1; that stretch reads GHVDHGKT. 19–26 serves as a coordination point for GTP; that stretch reads GHVDHGKT. Thr26 contacts Mg(2+). The segment at 61 to 65 is G2; that stretch reads GITIN. The G3 stretch occupies residues 82–85; the sequence is DCPG. GTP is bound by residues 82–86 and 137–140; these read DCPGH and NKVD. Residues 137 to 140 are G4; that stretch reads NKVD. A G5 region spans residues 175 to 177; it reads SAL.

Belongs to the TRAFAC class translation factor GTPase superfamily. Classic translation factor GTPase family. EF-Tu/EF-1A subfamily. Monomer.

The protein localises to the cytoplasm. The catalysed reaction is GTP + H2O = GDP + phosphate + H(+). Functionally, GTP hydrolase that promotes the GTP-dependent binding of aminoacyl-tRNA to the A-site of ribosomes during protein biosynthesis. The chain is Elongation factor Tu from Thermus thermophilus (strain ATCC BAA-163 / DSM 7039 / HB27).